The following is a 136-amino-acid chain: Large ribosomal subunit protein bL19 (136 aa).

The protein belongs to the bacterial ribosomal protein bL19 family.

This protein is located at the 30S-50S ribosomal subunit interface and may play a role in the structure and function of the aminoacyl-tRNA binding site. The protein is Large ribosomal subunit protein bL19 of Xylella fastidiosa (strain 9a5c).